Here is a 343-residue protein sequence, read N- to C-terminus: Protein RecA (343 aa).

Residue 64–71 (GPESSGKT) participates in ATP binding.

Belongs to the RecA family.

The protein resides in the cytoplasm. Its function is as follows. Can catalyze the hydrolysis of ATP in the presence of single-stranded DNA, the ATP-dependent uptake of single-stranded DNA by duplex DNA, and the ATP-dependent hybridization of homologous single-stranded DNAs. It interacts with LexA causing its activation and leading to its autocatalytic cleavage. This chain is Protein RecA, found in Cereibacter sphaeroides (strain ATCC 17023 / DSM 158 / JCM 6121 / CCUG 31486 / LMG 2827 / NBRC 12203 / NCIMB 8253 / ATH 2.4.1.) (Rhodobacter sphaeroides).